The sequence spans 262 residues: GTP cyclohydrolase 1 type 2 homolog (262 aa).

4 residues coordinate a divalent metal cation: histidine 65, aspartate 102, histidine 222, and glutamate 225.

Belongs to the GTP cyclohydrolase I type 2/NIF3 family. Homohexamer.

In Streptococcus pyogenes serotype M6 (strain ATCC BAA-946 / MGAS10394), this protein is GTP cyclohydrolase 1 type 2 homolog.